The primary structure comprises 112 residues: Large ribosomal subunit protein bL20c (112 aa).

Belongs to the bacterial ribosomal protein bL20 family.

The protein resides in the plastid. It is found in the chloroplast. Functionally, binds directly to 23S ribosomal RNA and is necessary for the in vitro assembly process of the 50S ribosomal subunit. It is not involved in the protein synthesizing functions of that subunit. The chain is Large ribosomal subunit protein bL20c (rpl20) from Anthoceros angustus (Hornwort).